We begin with the raw amino-acid sequence, 276 residues long: Large ribosomal subunit protein uL2 (276 aa).

The disordered stretch occupies residues 221–276; the sequence is RGSAMNPNDHPHGGGEGRAPIGRKSPMTPWGKKARGVKTRDRKKASNALIIRRRTK. Over residues 252-276 the composition is skewed to basic residues; the sequence is KKARGVKTRDRKKASNALIIRRRTK.

It belongs to the universal ribosomal protein uL2 family. Part of the 50S ribosomal subunit. Forms a bridge to the 30S subunit in the 70S ribosome.

Its function is as follows. One of the primary rRNA binding proteins. Required for association of the 30S and 50S subunits to form the 70S ribosome, for tRNA binding and peptide bond formation. It has been suggested to have peptidyltransferase activity; this is somewhat controversial. Makes several contacts with the 16S rRNA in the 70S ribosome. The sequence is that of Large ribosomal subunit protein uL2 from Aster yellows phytoplasma.